A 262-amino-acid chain; its full sequence is 4-hydroxy-2-oxo-heptane-1,7-dioate aldolase (262 aa).

The Proton acceptor role is filled by His45. Gln147 contributes to the substrate binding site. An a divalent metal cation-binding site is contributed by Glu149. 2 residues coordinate substrate: Ala174 and Asp175. Residue Asp175 coordinates a divalent metal cation.

It belongs to the HpcH/HpaI aldolase family. In terms of assembly, homohexamer; trimer of dimers. A divalent metal cation serves as cofactor.

It catalyses the reaction 4-hydroxy-2-oxoheptanedioate = succinate semialdehyde + pyruvate. It functions in the pathway aromatic compound metabolism; 4-hydroxyphenylacetate degradation; pyruvate and succinate semialdehyde from 4-hydroxyphenylacetate: step 7/7. Functionally, catalyzes the reversible retro-aldol cleavage of 4-hydroxy-2-ketoheptane-1,7-dioate (HKHD) to pyruvate and succinic semialdehyde. The polypeptide is 4-hydroxy-2-oxo-heptane-1,7-dioate aldolase (Shigella boydii serotype 4 (strain Sb227)).